The chain runs to 235 residues: Small ribosomal subunit protein uS2 (235 aa).

The protein belongs to the universal ribosomal protein uS2 family.

This chain is Small ribosomal subunit protein uS2, found in Geobacillus thermodenitrificans (strain NG80-2).